The following is a 328-amino-acid chain: N-acetyl-gamma-glutamyl-phosphate reductase (328 aa).

The active site involves cysteine 143.

Belongs to the NAGSA dehydrogenase family. Type 1 subfamily.

It is found in the cytoplasm. It carries out the reaction N-acetyl-L-glutamate 5-semialdehyde + phosphate + NADP(+) = N-acetyl-L-glutamyl 5-phosphate + NADPH + H(+). It functions in the pathway amino-acid biosynthesis; L-arginine biosynthesis; N(2)-acetyl-L-ornithine from L-glutamate: step 3/4. Its function is as follows. Catalyzes the NADPH-dependent reduction of N-acetyl-5-glutamyl phosphate to yield N-acetyl-L-glutamate 5-semialdehyde. This is N-acetyl-gamma-glutamyl-phosphate reductase from Methanoregula boonei (strain DSM 21154 / JCM 14090 / 6A8).